The following is a 302-amino-acid chain: 33 kDa chaperonin (302 aa).

2 disulfide bridges follow: Cys234-Cys236 and Cys267-Cys270.

It belongs to the HSP33 family. Post-translationally, under oxidizing conditions two disulfide bonds are formed involving the reactive cysteines. Under reducing conditions zinc is bound to the reactive cysteines and the protein is inactive.

The protein resides in the cytoplasm. Redox regulated molecular chaperone. Protects both thermally unfolding and oxidatively damaged proteins from irreversible aggregation. Plays an important role in the bacterial defense system toward oxidative stress. The sequence is that of 33 kDa chaperonin from Neisseria meningitidis serogroup A / serotype 4A (strain DSM 15465 / Z2491).